We begin with the raw amino-acid sequence, 148 residues long: Large ribosomal subunit protein bL9 (148 aa).

This sequence belongs to the bacterial ribosomal protein bL9 family.

Its function is as follows. Binds to the 23S rRNA. The sequence is that of Large ribosomal subunit protein bL9 from Pseudomonas fluorescens (strain Pf0-1).